The chain runs to 490 residues: Lysine--tRNA ligase (490 aa).

The Mg(2+) site is built by glutamate 400 and glutamate 407.

It belongs to the class-II aminoacyl-tRNA synthetase family. Homodimer. The cofactor is Mg(2+).

The protein localises to the cytoplasm. It catalyses the reaction tRNA(Lys) + L-lysine + ATP = L-lysyl-tRNA(Lys) + AMP + diphosphate. In Mycoplasma genitalium (strain ATCC 33530 / DSM 19775 / NCTC 10195 / G37) (Mycoplasmoides genitalium), this protein is Lysine--tRNA ligase (lysS).